A 380-amino-acid chain; its full sequence is Glucose-1-phosphate adenylyltransferase (380 aa).

Alpha-D-glucose 1-phosphate is bound by residues Gly-164, Glu-179–Lys-180, and Ser-190.

Belongs to the bacterial/plant glucose-1-phosphate adenylyltransferase family. Homotetramer.

It catalyses the reaction alpha-D-glucose 1-phosphate + ATP + H(+) = ADP-alpha-D-glucose + diphosphate. It participates in glycan biosynthesis; glycogen biosynthesis. Involved in the biosynthesis of ADP-glucose, a building block required for the elongation reactions to produce glycogen. Catalyzes the reaction between ATP and alpha-D-glucose 1-phosphate (G1P) to produce pyrophosphate and ADP-Glc. The chain is Glucose-1-phosphate adenylyltransferase from Lacticaseibacillus casei (strain BL23) (Lactobacillus casei).